Reading from the N-terminus, the 906-residue chain is MVSFGGFARKIFGSSNDRRVKTLRQRANQITAIEKNYENLTDEQLQAKTAEFRAALAGGKTLDSLLPDAFATAREAAKRVLGMRPFDVQLIGGMVLHERGIAEMRTGEGKTLMATLPVYLNALEGKGVHVVTVNDYLATRDAETMGKLYNFLGLTVGVIKHGLDDDERRAAYACDITYGTNNELGFDYLRDNMKYERAQMVQRPHNYAIVDEVDSILIDEARTPLIISGPLEDRSDFYNLIDTFIPALEPEDFEIDEKQKTAIFTEVGTEKVEQLLEAAGHLKGESLYDIENVAVVHHLNNALRAHKLFQRDKDYIVRNDEIVIIDEFTGRMMPGRRYSEGLHQALEAKEHVTIQPENQTLASITFQNYFRMYNKLSGMTGTAATEAEEFGNIYGLEVLEIPTNLPVQRIDEDDEVYRSVEEKYRAIVRDIRASHEKGQPILVGTTSIEKSEQLAERLRKEGIKEFQVLNARYHEQEAYIIAQAGVPGTVTIATNMAGRGTDIQLGGNLEMRVRQELSDIPEGPERDAKIAEIKADIAQLKEKALAAGGLYVLATERHESRRIDNQLRGRSGRQGDPGRSKFFLSLQDDLMRIFGSDRMDSMLQKLGLKEDEAIVHPWINKALEKAQKKVEARNFEIRKNLLKYDDVMNDQRKVIFEQRLEMMDEEDLTETVGEMRHEVIEDMVALRIPKDAYAEKWDIAGLKEDIISKLNLDLPVEDWAKEEGIAEEEFENRIKEAADKAAAEKAERFGPQIMTYVEKSVIMQSLDNLWREHLVNLDHLRSVVGFRGYAQRDPLNEYKTEAFELFQSMLANLREVVISQLMRVEIVREAPPEPELPPMTGRHIDSTTGENDFDEASWSDHQHDERNVPAAERDPADPRTWGKVSRNEACPCGSGKKYKHCHGAFE.

ATP-binding positions include Q89, 107–111 (GEGKT), and D502. Residues 829–898 (EAPPEPELPP…ACPCGSGKKY (70 aa)) are disordered. Over residues 858–877 (WSDHQHDERNVPAAERDPAD) the composition is skewed to basic and acidic residues. 4 residues coordinate Zn(2+): C890, C892, C901, and H902.

This sequence belongs to the SecA family. As to quaternary structure, monomer and homodimer. Part of the essential Sec protein translocation apparatus which comprises SecA, SecYEG and auxiliary proteins SecDF-YajC and YidC. Requires Zn(2+) as cofactor.

It is found in the cell inner membrane. Its subcellular location is the cytoplasm. The enzyme catalyses ATP + H2O + cellular proteinSide 1 = ADP + phosphate + cellular proteinSide 2.. Functionally, part of the Sec protein translocase complex. Interacts with the SecYEG preprotein conducting channel. Has a central role in coupling the hydrolysis of ATP to the transfer of proteins into and across the cell membrane, serving both as a receptor for the preprotein-SecB complex and as an ATP-driven molecular motor driving the stepwise translocation of polypeptide chains across the membrane. The protein is Protein translocase subunit SecA of Brucella anthropi (strain ATCC 49188 / DSM 6882 / CCUG 24695 / JCM 21032 / LMG 3331 / NBRC 15819 / NCTC 12168 / Alc 37) (Ochrobactrum anthropi).